Consider the following 881-residue polypeptide: Disks large homolog 2 (881 aa).

Disordered stretches follow at residues 16 to 41 and 63 to 88; these read HRQQ…MNPA and LSTT…SFPR. 3 consecutive PDZ domains span residues 155-242, 250-337, and 424-505; these read EITL…RRRR, EIKL…GKPT, and KIVL…QYRP. The SH3 domain occupies 539–609; the sequence is KRSLYVRALF…PSKRRVERKE (71 aa). The Guanylate kinase-like domain maps to 683–866; the sequence is ARPVIILGPM…IYNQCKMVIE (184 aa). A disordered region spans residues 709–729; sequence GSCVPPANSSDQEDTTRPKRD.

Belongs to the MAGUK family.

The protein localises to the cell membrane. It is found in the postsynaptic density. The protein resides in the synapse. It localises to the membrane. Its subcellular location is the cell projection. The protein localises to the axon. It is found in the perikaryon. May play a role in synapse assembly and function. The protein is Disks large homolog 2 (dlg2) of Danio rerio (Zebrafish).